The sequence spans 433 residues: Schlafen-like protein 2 (433 aa).

The 168-residue stretch at 1–168 (MADTSPRESK…LSVNFGSQPF (168 aa)) folds into the B30.2/SPRY domain. An SLFN-like fold region spans residues 199-400 (EHVVVKLPFA…RRMASNKCVY (202 aa)). Active-site residues include Glu-211 and Glu-216.

This sequence belongs to the Schlafen family. Component of the trimeric PUCH (precursor of 21U RNA 5'-end cleavage holoenzyme) complex; consisting of tofu-1, tofu-2 and either slfl-3 or slfl-4. Within the complex, interacts (via N-terminus) with tofu-1 (via N-terminus); the interaction stabilizes tofu-2 and may form a functional nuclease. Within the complex, interacts (via N-terminus) with slfl-3 (via N-terminus); the presence of tofu-1 is required for this interaction. Mg(2+) is required as a cofactor. As to expression, expressed in the germline.

It localises to the cytoplasm. Its subcellular location is the mitochondrion. With respect to regulation, inhibited by ethylenediaminetetraacetic acid (EDTA). In terms of biological role, component of the trimeric PUCH (precursor of 21U RNA 5'-end cleavage holoenzyme) complex, that acts as an endoribonuclease processing the 5'-end of precursor Piwi-interacting RNAs (piRNAs). The PUCH complex consists of tofu-1, tofu-2 and either slfl-3 or slfl-4, with tofu-2 exhibiting endoribonuclease activity. PUCH-mediated processing strictly requires a 7-methyl-G cap (m7 G-cap) and an uracil at position three (U3). PUCH also exhibits a strict bias for piRNA precursors with an A or G at position 1. Mature piRNA production is enhanced by the interaction of PUCH with the PETISCO complex, which is stabilizing piRNA precursors and allows their processing by PUCH. This is Schlafen-like protein 2 from Caenorhabditis elegans.